A 144-amino-acid polypeptide reads, in one-letter code: Maximins 3/H16 (144 aa).

An N-terminal signal peptide occupies residues 1–18; that stretch reads MNFKYIVAVSFLIASAYA. 2 propeptides span residues 19–43 and 73–122; these read RSVQNDEQSLSQRDVLEEESLREIR and RTAE…KKEK. An Isoleucine amide modification is found at I143.

Belongs to the bombinin family. Expressed by the skin glands.

The protein resides in the secreted. In terms of biological role, maximin-3 shows antibacterial activity against both Gram-positive and Gram-negative bacteria. It also shows antimicrobial activity against the fungus C.albicans, but not against A.flavus nor P.uticale. It has little hemolytic activity. It possess a significant cytotoxicity against tumor cell lines. It possess a significant anti-HIV activity. It shows high spermicidal activity. Functionally, maximin-H16 shows antimicrobial activity against bacteria and against the fungus C.albicans. Shows strong hemolytic activity. This chain is Maximins 3/H16, found in Bombina maxima (Giant fire-bellied toad).